The following is a 64-amino-acid chain: Large ribosomal subunit protein bL35 (64 aa).

The protein belongs to the bacterial ribosomal protein bL35 family.

This chain is Large ribosomal subunit protein bL35, found in Acinetobacter baylyi (strain ATCC 33305 / BD413 / ADP1).